Consider the following 245-residue polypeptide: Probable phosphatase YpAngola_A2446 (245 aa).

Positions 7, 9, 15, 40, 73, 101, 131, 192, and 194 each coordinate Zn(2+).

The protein belongs to the PHP family. As to quaternary structure, homotrimer. Zn(2+) is required as a cofactor.

This is Probable phosphatase YpAngola_A2446 from Yersinia pestis bv. Antiqua (strain Angola).